Here is a 577-residue protein sequence, read N- to C-terminus: Proline--tRNA ligase (577 aa).

It belongs to the class-II aminoacyl-tRNA synthetase family. ProS type 1 subfamily. Homodimer.

It is found in the cytoplasm. The enzyme catalyses tRNA(Pro) + L-proline + ATP = L-prolyl-tRNA(Pro) + AMP + diphosphate. In terms of biological role, catalyzes the attachment of proline to tRNA(Pro) in a two-step reaction: proline is first activated by ATP to form Pro-AMP and then transferred to the acceptor end of tRNA(Pro). As ProRS can inadvertently accommodate and process non-cognate amino acids such as alanine and cysteine, to avoid such errors it has two additional distinct editing activities against alanine. One activity is designated as 'pretransfer' editing and involves the tRNA(Pro)-independent hydrolysis of activated Ala-AMP. The other activity is designated 'posttransfer' editing and involves deacylation of mischarged Ala-tRNA(Pro). The misacylated Cys-tRNA(Pro) is not edited by ProRS. This is Proline--tRNA ligase from Helicobacter pylori (strain G27).